A 455-amino-acid polypeptide reads, in one-letter code: Differentiation-associated protein 1 (455 aa).

Positions 1–21 are cleaved as a signal peptide; that stretch reads MKFKLFLLVFFVFLLPYLSQS. The interval 349-434 is disordered; that stretch reads IGSSSSSSSS…SDDDLGNPSS (86 aa). Residues 351–423 show a composition bias toward low complexity; the sequence is SSSSSSSSSS…KSNHTSSESS (73 aa). Residue serine 433 is the site of GPI-like-anchor amidated serine attachment. Residues 434–455 constitute a propeptide, removed in mature form; it reads SSSILSVSKLIILLISIILYCF.

The protein resides in the cell membrane. Functionally, plays a role in differentiation. This chain is Differentiation-associated protein 1 (dia1), found in Dictyostelium discoideum (Social amoeba).